A 120-amino-acid polypeptide reads, in one-letter code: Immunoglobulin kappa variable 2D-26 (120 aa).

The N-terminal stretch at 1–20 is a signal peptide; that stretch reads MRLPAQLLGLLMLWVPGSSA. Positions 21–43 are framework-1; the sequence is EIVMTQTPLSLSITPGEQASMSC. Residues 21-120 form the Ig-like domain; that stretch reads EIVMTQTPLS…YYCMQDAQDP (100 aa). A disulfide bridge links cysteine 43 with cysteine 113. Residues 44–59 are complementarity-determining-1; it reads RSSQSLLHSDGYTYLY. The segment at 60–74 is framework-2; the sequence is WFLQKARPVSTLLIY. The tract at residues 75–81 is complementarity-determining-2; that stretch reads EVSNRFS. Residues 82–113 are framework-3; that stretch reads GVPDRFSGSGSGTDFTLKISRVEAEDFGVYYC. Positions 114 to 120 are complementarity-determining-3; it reads MQDAQDP.

Immunoglobulins are composed of two identical heavy chains and two identical light chains; disulfide-linked.

It localises to the secreted. The protein localises to the cell membrane. Its function is as follows. V region of the variable domain of immunoglobulin light chains that participates in the antigen recognition. Immunoglobulins, also known as antibodies, are membrane-bound or secreted glycoproteins produced by B lymphocytes. In the recognition phase of humoral immunity, the membrane-bound immunoglobulins serve as receptors which, upon binding of a specific antigen, trigger the clonal expansion and differentiation of B lymphocytes into immunoglobulins-secreting plasma cells. Secreted immunoglobulins mediate the effector phase of humoral immunity, which results in the elimination of bound antigens. The antigen binding site is formed by the variable domain of one heavy chain, together with that of its associated light chain. Thus, each immunoglobulin has two antigen binding sites with remarkable affinity for a particular antigen. The variable domains are assembled by a process called V-(D)-J rearrangement and can then be subjected to somatic hypermutations which, after exposure to antigen and selection, allow affinity maturation for a particular antigen. In Homo sapiens (Human), this protein is Immunoglobulin kappa variable 2D-26.